We begin with the raw amino-acid sequence, 213 residues long: tRNA (guanine-N(7)-)-methyltransferase (213 aa).

Residues E44, E69, N96, and D118 each coordinate S-adenosyl-L-methionine. Residue D118 is part of the active site. K122 is a substrate binding site. Positions 124–129 (RHEKRR) are interaction with RNA. Substrate contacts are provided by residues D154 and 192–195 (TEYE).

This sequence belongs to the class I-like SAM-binding methyltransferase superfamily. TrmB family.

The catalysed reaction is guanosine(46) in tRNA + S-adenosyl-L-methionine = N(7)-methylguanosine(46) in tRNA + S-adenosyl-L-homocysteine. It participates in tRNA modification; N(7)-methylguanine-tRNA biosynthesis. Its function is as follows. Catalyzes the formation of N(7)-methylguanine at position 46 (m7G46) in tRNA. The polypeptide is tRNA (guanine-N(7)-)-methyltransferase (Latilactobacillus sakei subsp. sakei (strain 23K) (Lactobacillus sakei subsp. sakei)).